The following is an 876-amino-acid chain: Alanine--tRNA ligase (876 aa).

K74 is modified (N6-acetyllysine). The Zn(2+) site is built by H564, H568, C666, and H670.

It belongs to the class-II aminoacyl-tRNA synthetase family. In terms of assembly, homotetramer. The cofactor is Zn(2+).

Its subcellular location is the cytoplasm. It carries out the reaction tRNA(Ala) + L-alanine + ATP = L-alanyl-tRNA(Ala) + AMP + diphosphate. In terms of biological role, catalyzes the attachment of alanine to tRNA(Ala) in a two-step reaction: alanine is first activated by ATP to form Ala-AMP and then transferred to the acceptor end of tRNA(Ala). Also edits incorrectly charged Ser-tRNA(Ala) and Gly-tRNA(Ala) via its editing domain. This Shigella dysenteriae serotype 1 (strain Sd197) protein is Alanine--tRNA ligase.